We begin with the raw amino-acid sequence, 105 residues long: Prokineticin-1 (105 aa).

Residues methionine 1–cysteine 19 form the signal peptide. Disulfide bonds link cysteine 26–cysteine 38, cysteine 32–cysteine 50, cysteine 37–cysteine 78, cysteine 60–cysteine 86, and cysteine 80–cysteine 96.

It belongs to the AVIT (prokineticin) family. In terms of tissue distribution, highly expressed in liver and ovary and weakly expressed in testis and placenta. Expressed in mucosa and mesenchyme of embryonic gut during enteric nervous system development (at protein level). Predominantly expressed in kidney and liver. Also expressed in lung, ovary, placenta and testis. In fetal liver, is restricted to and highly expressed in hepatocytes. In adult kidney, expression is restricted to the endothelial tubule cells. In placenta, expressed throughout gestation.

It is found in the secreted. Functionally, potently contracts gastrointestinal (GI) smooth muscle. Induces proliferation, migration and fenestration (the formation of membrane discontinuities) in capillary endothelial cells. Induces proliferation and differentiation, but not migration, of enteric neural crest cells. Directly influences neuroblastoma progression by promoting the proliferation and migration of neuroblastoma cells. Positively regulates PTGS2 expression and prostaglandin synthesis. May play a role in placentation. May play a role in normal and pathological testis angiogenesis. The protein is Prokineticin-1 of Mus musculus (Mouse).